The sequence spans 208 residues: Ras-related protein Rab-6B (208 aa).

GTP-binding positions include 20 to 27, T45, 68 to 72, and 126 to 129; these read GEQSVGKT, DTAGQ, and NKTD. Residues 42 to 50 carry the Effector region motif; the sequence is YQATIGIDF. Residues C206 and C208 are each lipidated (S-geranylgeranyl cysteine). The residue at position 208 (C208) is a Cysteine methyl ester.

It belongs to the small GTPase superfamily. Rab family. As to quaternary structure, interacts (GTP-bound) with BICD1 (via C-terminus); the interaction is direct. Interacts (GDP-bound) with DYNLRB1. Interacts (GTP-bound) with APBA1/MINT1. Interacts (GTP-bound) with VPS13B.

The protein resides in the golgi apparatus membrane. It is found in the endoplasmic reticulum-Golgi intermediate compartment. It localises to the cytoplasmic vesicle. The enzyme catalyses GTP + H2O = GDP + phosphate + H(+). Its activity is regulated as follows. Regulated by guanine nucleotide exchange factors (GEFs) which promote the exchange of bound GDP for free GTP, GTPase activating proteins (GAPs) which increase the GTP hydrolysis activity, and GDP dissociation inhibitors which inhibit the dissociation of the nucleotide from the GTPase. The small GTPases Rab are key regulators of intracellular membrane trafficking, from the formation of transport vesicles to their fusion with membranes. Rabs cycle between active GTP-bound and inactive GDP-bound states. In their active state, drive transport of vesicular carriers from donor organelles to acceptor organelles to regulate the membrane traffic that maintains organelle identity and morphology. Recruits VPS13B to the Golgi membrane. Regulates the compacted morphology of the Golgi. Seems to have a role in retrograde membrane traffic at the level of the Golgi complex. May function in retrograde transport in neuronal cells. Plays a role in neuron projection development. In Bos taurus (Bovine), this protein is Ras-related protein Rab-6B (RAB6B).